Consider the following 134-residue polypeptide: 6,7-dimethyl-8-ribityllumazine synthase (134 aa).

5-amino-6-(D-ribitylamino)uracil is bound by residues F12, 44–46, and 68–70; these read VFD and SVI. 73–74 serves as a coordination point for (2S)-2-hydroxy-3-oxobutyl phosphate; the sequence is DT. The active-site Proton donor is the H76. L101 provides a ligand contact to 5-amino-6-(D-ribitylamino)uracil. (2S)-2-hydroxy-3-oxobutyl phosphate is bound at residue R116.

The protein belongs to the DMRL synthase family.

It catalyses the reaction (2S)-2-hydroxy-3-oxobutyl phosphate + 5-amino-6-(D-ribitylamino)uracil = 6,7-dimethyl-8-(1-D-ribityl)lumazine + phosphate + 2 H2O + H(+). It functions in the pathway cofactor biosynthesis; riboflavin biosynthesis; riboflavin from 2-hydroxy-3-oxobutyl phosphate and 5-amino-6-(D-ribitylamino)uracil: step 1/2. Functionally, catalyzes the formation of 6,7-dimethyl-8-ribityllumazine by condensation of 5-amino-6-(D-ribitylamino)uracil with 3,4-dihydroxy-2-butanone 4-phosphate. This is the penultimate step in the biosynthesis of riboflavin. The sequence is that of 6,7-dimethyl-8-ribityllumazine synthase from Methanosarcina barkeri (strain Fusaro / DSM 804).